Here is a 115-residue protein sequence, read N- to C-terminus: Large ribosomal subunit protein uL22 (115 aa).

This sequence belongs to the universal ribosomal protein uL22 family. Part of the 50S ribosomal subunit.

Its function is as follows. This protein binds specifically to 23S rRNA; its binding is stimulated by other ribosomal proteins, e.g. L4, L17, and L20. It is important during the early stages of 50S assembly. It makes multiple contacts with different domains of the 23S rRNA in the assembled 50S subunit and ribosome. The globular domain of the protein is located near the polypeptide exit tunnel on the outside of the subunit, while an extended beta-hairpin is found that lines the wall of the exit tunnel in the center of the 70S ribosome. In Lactococcus lactis subsp. lactis (strain IL1403) (Streptococcus lactis), this protein is Large ribosomal subunit protein uL22.